Consider the following 213-residue polypeptide: Lysozyme g-like protein 2 (213 aa).

An N-terminal signal peptide occupies residues Met1–Gly19. Disulfide bonds link Cys40-Cys93 and Cys54-Cys62. Residue Glu106 is part of the active site.

It belongs to the glycosyl hydrolase 23 family.

The protein resides in the secreted. May act as a potent antibacterial protein that may play a role in the innate immunity. This Mus musculus (Mouse) protein is Lysozyme g-like protein 2 (Lyg2).